A 907-amino-acid polypeptide reads, in one-letter code: Glutamate receptor 1 (907 aa).

An N-terminal signal peptide occupies residues 1–18 (MPYIFAFFCTGFLGAVVG). Over 19–536 (ANFPNNIQIG…GVFSFLDPLA (518 aa)) the chain is Extracellular. Asn-63, Asn-249, Asn-257, Asn-363, Asn-401, and Asn-406 each carry an N-linked (GlcNAc...) asparagine glycan. Cys-75 and Cys-323 form a disulfide bridge. Residues Pro-492, Thr-494, and Arg-499 each coordinate L-glutamate. Residues 537–557 (YEIWMCIVFAYIGVSVVLFLV) form a helical membrane-spanning segment. The Cytoplasmic segment spans residues 558–584 (SRFSPYEWHSEEFEEGRDQTTSDQSNE). An intramembrane region (helical; Pore-forming) is located at residues 585 to 600 (FGIFNSLWFSLGAFMQ). The stretch at 601-603 (QGC) is an intramembrane region. Cys-603 carries the S-palmitoyl cysteine lipid modification. Residues 604-609 (DISPRS) lie on the Cytoplasmic side of the membrane. The helical transmembrane segment at 610-630 (LSGRIVGGVWWFFTLIIISSY) threads the bilayer. The Extracellular portion of the chain corresponds to 631–805 (TANLAAFLTV…DKTSALSLSN (175 aa)). Ser-645 is modified (phosphoserine). Positions 668 and 669 each coordinate L-glutamate. Ser-710 carries the post-translational modification Phosphoserine. Glu-719 contributes to the L-glutamate binding site. The cysteines at positions 732 and 787 are disulfide-linked. A helical membrane pass occupies residues 806-826 (VAGVFYILIGGLGLAMLVALI). At 827–907 (EFCYKSRSES…SGMPLGATGL (81 aa)) the chain is on the cytoplasmic side. Cys-829 carries the S-palmitoyl cysteine lipid modification. A phosphoserine mark is found at Ser-849 and Ser-863. Residues 857-881 (STLPRNSGAGASGGSGSGENGRVVS) are disordered. The span at 866–875 (GASGGSGSGE) shows a compositional bias: gly residues. Residues 904–907 (ATGL) carry the PDZ-binding motif.

This sequence belongs to the glutamate-gated ion channel (TC 1.A.10.1) family. GRIA1 subfamily. In terms of assembly, homotetramer or heterotetramer of pore-forming glutamate receptor subunits. Heteromeric assembly can be the result of both receptor subtype and flip or flop form and according the composition, one partner can be dominant with respect to the fast desensitizing current component, whereas the other can determine the steady-state component. Tetramers may be formed by the dimerization of dimers. Found in a complex with GRIA2, GRIA3, GRIA4, CNIH2, CNIH3, CACNG2, CACNG3, CACNG4, CACNG5, CACNG7 and CACNG8. Interacts with HIP1 and RASGRF2. Interacts with SYNDIG1 and GRIA2. Interacts with DLG1 (via C-terminus). Interacts with LRFN1. Interacts with PRKG2. Interacts with CNIH2 and CACNG2. Interacts with CACNG5; this interaction modulates the gating. Interacts (via C-terminus) with PDLIM4 (via LIM domain); this interaction as well as the interaction of PDLIM4 with alpha-actinin is required for their colocalization in early endosomes. Interacts with SNX27 (via PDZ domain); the interaction is required for recycling to the plasma membrane when endocytosed and prevent degradation in lysosomes. Interacts (via PDZ-binding motif) with SHANK3 (via PDZ domain). Interacts with CACNG3; associates GRIA1 with the adapter protein complex 4 (AP-4) to target GRIA1 to the somatodendritic compartment of neurons. Interacts with CACNG2; this interaction mediates traffick to the plasma membrane and modulation of desensitization. Interacts with CNIH2 and CNIH3; this interaction promotes expression at the plasma membrane and extensively modulates their gating properties by slowing deactivation and desensitization kinetics. Found in a complex with GRIA2, GRIA3, GRIA4, DLG4, CACNG8 and CNIH2. In terms of processing, phosphorylated at Ser-645. Phosphorylated at Ser-710 by PKC. Phosphorylated at Ser-849 by PKC, PKA and CAMK2. Phosphorylated at Ser-863 by PKC, PKA and PRKG2. Phosphorylation of Ser-863 is reduced by induction of long-term depression and increased by induction of long-term potentiation. Post-translationally, palmitoylated. Depalmitoylated by CPT1C and upon L-glutamate stimulation. ZDHHC3/GODZ specifically palmitoylates Cys-603, which leads to Golgi retention and decreased cell surface expression. In contrast, Cys-829 palmitoylation does not affect cell surface expression but regulates stimulation-dependent endocytosis. Expressed in the outer plexiform layer of the retina of the eye (at protein level). Expressed in the forebrain and hippocampus (at protein level).

The protein localises to the cell membrane. The protein resides in the endoplasmic reticulum membrane. It is found in the postsynaptic cell membrane. Its subcellular location is the postsynaptic density membrane. It localises to the cell projection. The protein localises to the dendrite. The protein resides in the dendritic spine. It is found in the early endosome membrane. Its subcellular location is the recycling endosome membrane. It localises to the presynapse. The protein localises to the synapse. The catalysed reaction is Ca(2+)(in) = Ca(2+)(out). It carries out the reaction Na(+)(in) = Na(+)(out). It catalyses the reaction Mg(2+)(in) = Mg(2+)(out). The enzyme catalyses Li(+)(in) = Li(+)(out). The catalysed reaction is K(+)(in) = K(+)(out). It carries out the reaction Sr(2+)(in) = Sr(2+)(out). Its function is as follows. Ionotropic glutamate receptor that functions as a ligand-gated cation channel, gated by L-glutamate and glutamatergic agonists such as alpha-amino-3-hydroxy-5-methyl-4-isoxazolepropionic acid (AMPA), quisqualic acid, and kainic acid. L-glutamate acts as an excitatory neurotransmitter at many synapses in the central nervous system. Binding of the excitatory neurotransmitter L-glutamate induces a conformation change, leading to the opening of the cation channel, and thereby converts the chemical signal to an electrical impulse upon entry of monovalent and divalent cations such as sodium and calcium. The receptor then desensitizes rapidly and enters in a transient inactive state, characterized by the presence of bound agonist. In the presence of CACNG2 or CACNG4 or CACNG7 or CACNG8, shows resensitization which is characterized by a delayed accumulation of current flux upon continued application of L-glutamate. Calcium (Ca(2+)) permeability depends on subunits composition and, heteromeric channels containing edited GRIA2 subunit are calcium-impermeable. Also permeable to other divalents cations such as strontium(2+) and magnesium(2+) and monovalent cations such as potassium(1+) and lithium(1+). The polypeptide is Glutamate receptor 1 (Mus musculus (Mouse)).